The following is a 450-amino-acid chain: Serine/threonine-protein kinase-transforming protein Rmil (450 aa).

Basic and acidic residues-rich tracts occupy residues 1-14 and 49-73; these read MEAVIKDLIRDQGV and QRERKSSSSSEDRNRMKTLGRRDSS. Residues 1–80 are disordered; sequence MEAVIKDLIR…DSSDDWEIPD (80 aa). The region spanning 83 to 343 is the Protein kinase domain; sequence ITVGQRIGSG…PQILASIELL (261 aa). ATP contacts are provided by residues 89-97 and K109; that span reads IGSGSFGTV. D202 functions as the Proton acceptor in the catalytic mechanism.

Belongs to the protein kinase superfamily. TKL Ser/Thr protein kinase family. RAF subfamily.

It carries out the reaction L-seryl-[protein] + ATP = O-phospho-L-seryl-[protein] + ADP + H(+). The catalysed reaction is L-threonyl-[protein] + ATP = O-phospho-L-threonyl-[protein] + ADP + H(+). This is Serine/threonine-protein kinase-transforming protein Rmil (V-RMIL) from Avian rous-associated virus type 1.